The primary structure comprises 527 residues: 4-alpha-glucanotransferase (527 aa).

It belongs to the disproportionating enzyme family.

It is found in the cytoplasm. The enzyme catalyses Transfers a segment of a (1-&gt;4)-alpha-D-glucan to a new position in an acceptor, which may be glucose or a (1-&gt;4)-alpha-D-glucan.. The polypeptide is 4-alpha-glucanotransferase (malQ) (Chlamydia muridarum (strain MoPn / Nigg)).